The primary structure comprises 670 residues: DNA ligase (670 aa).

NAD(+)-binding positions include 32–36, 81–82, and Glu-110; these read DAEYD and SL. The active-site N6-AMP-lysine intermediate is Lys-112. NAD(+) contacts are provided by Arg-133, Glu-170, Lys-289, and Lys-313. Zn(2+) is bound by residues Cys-407, Cys-410, Cys-425, and Cys-431. A BRCT domain is found at 590-670; it reads ESQLSLKGQT…ALMDLLNAAN (81 aa).

Belongs to the NAD-dependent DNA ligase family. LigA subfamily. The cofactor is Mg(2+). Requires Mn(2+) as cofactor.

The enzyme catalyses NAD(+) + (deoxyribonucleotide)n-3'-hydroxyl + 5'-phospho-(deoxyribonucleotide)m = (deoxyribonucleotide)n+m + AMP + beta-nicotinamide D-nucleotide.. Functionally, DNA ligase that catalyzes the formation of phosphodiester linkages between 5'-phosphoryl and 3'-hydroxyl groups in double-stranded DNA using NAD as a coenzyme and as the energy source for the reaction. It is essential for DNA replication and repair of damaged DNA. This Shewanella frigidimarina (strain NCIMB 400) protein is DNA ligase.